A 446-amino-acid polypeptide reads, in one-letter code: Tubulin gamma chain (446 aa).

Position 142–148 (A142–G148) interacts with GTP.

Belongs to the tubulin family. In terms of assembly, interacts with mto1. Interacts with mto2.

The protein resides in the cytoplasm. It localises to the cytoskeleton. The protein localises to the microtubule organizing center. It is found in the spindle pole body. In terms of biological role, tubulin is the major constituent of microtubules. The gamma chain is found at microtubule organizing centers (MTOC) such as the spindle poles or the centrosome, suggesting that it is involved in the minus-end nucleation of microtubule assembly. This is Tubulin gamma chain from Schizosaccharomyces pombe (strain 972 / ATCC 24843) (Fission yeast).